A 436-amino-acid polypeptide reads, in one-letter code: 3-ketoacyl-CoA thiolase (436 aa).

C99 (acyl-thioester intermediate) is an active-site residue. Catalysis depends on proton acceptor residues H392 and C422.

It belongs to the thiolase-like superfamily. Thiolase family. As to quaternary structure, heterotetramer of two alpha chains (FadJ) and two beta chains (FadI).

The protein localises to the cytoplasm. The enzyme catalyses an acyl-CoA + acetyl-CoA = a 3-oxoacyl-CoA + CoA. It participates in lipid metabolism; fatty acid beta-oxidation. Catalyzes the final step of fatty acid oxidation in which acetyl-CoA is released and the CoA ester of a fatty acid two carbons shorter is formed. The protein is 3-ketoacyl-CoA thiolase of Salmonella dublin (strain CT_02021853).